Reading from the N-terminus, the 395-residue chain is uncharacterized protein (395 aa).

8 consecutive transmembrane segments (helical) span residues isoleucine 15 to phenylalanine 35, tryptophan 56 to isoleucine 76, phenylalanine 86 to valine 106, alanine 131 to tryptophan 151, tryptophan 175 to alanine 195, leucine 254 to valine 274, isoleucine 298 to valine 318, and valine 348 to isoleucine 368.

It is found in the cell membrane. This is an uncharacterized protein from Mycoplasma pneumoniae (strain ATCC 29342 / M129 / Subtype 1) (Mycoplasmoides pneumoniae).